The primary structure comprises 572 residues: MAGGAREVLTLQLGHFAGFVGAHWWNQQDAALCRPTDAKEPPGELCPDVLYRTGRTLHGQETYTPRLILMDLKGSLSSLKQEGGLYRDKQLDAAIAWQGKLTTHKEELYPKNPYLQDLLSAEGVLSSDGTWRVKSIPNGKGLPPFTNAITPKPVMPTEGSIRVWSDFLRVHLHPRSICMIHKYNHDGEAGRLEAFGQGESILKEPKYLEELEDRLHFYVEECDYLQGFQILCDLHDGFSGLGAKAAELLQDEYSGRGIITWGLLPGPYRLGELQKNIYRLLNTAFGLVHLSAHSSLVCPLSLGGSLGLRPEPPVSFPLLQYDATLPFHCGAILATALDTVTVPYRLRSSPVSMVHLADMLNFSGKKVVTAGATIPFPSVPSQSLPDTLMQLGEATPWTPLSACGDPSGTCCFAQSVVLRGLDRAHHTSQLAPGTPLPSPLHACATGEEVLAQYLQQQQPRVRSSSHLLLTPCKVVPPYPSLFSSSLSQHGSVLDGLPTGTAVESIPVLGALCSSSSLNRALGDLAKDLSKLDLRRWASFMDAGVEQDDLEETLQDLRSLAQCYEGGDDRLVD.

It belongs to the misato family.

The protein resides in the mitochondrion outer membrane. It localises to the cytoplasm. In terms of biological role, involved in the regulation of mitochondrial distribution and morphology. Required for mitochondrial fusion and mitochondrial network formation. The polypeptide is Protein misato homolog 1 (MSTO1) (Bos taurus (Bovine)).